Here is a 425-residue protein sequence, read N- to C-terminus: Tyrosine--tRNA ligase (425 aa).

An L-tyrosine-binding site is contributed by Tyr34. Residues 39–48 (PTADSLHVGN) carry the 'HIGH' region motif. Residues Tyr171 and Gln175 each contribute to the L-tyrosine site. Positions 231–235 (KYGKS) match the 'KMSKS' region motif. Lys234 contacts ATP. The 67-residue stretch at 358 to 424 (APLVELLVHA…GKRTYTVVKI (67 aa)) folds into the S4 RNA-binding domain.

It belongs to the class-I aminoacyl-tRNA synthetase family. TyrS type 1 subfamily. Homodimer.

The protein localises to the cytoplasm. It carries out the reaction tRNA(Tyr) + L-tyrosine + ATP = L-tyrosyl-tRNA(Tyr) + AMP + diphosphate + H(+). Catalyzes the attachment of tyrosine to tRNA(Tyr) in a two-step reaction: tyrosine is first activated by ATP to form Tyr-AMP and then transferred to the acceptor end of tRNA(Tyr). In Opitutus terrae (strain DSM 11246 / JCM 15787 / PB90-1), this protein is Tyrosine--tRNA ligase.